A 1019-amino-acid chain; its full sequence is Vacuolar membrane protease (1019 aa).

Topologically, residues 1 to 69 (MFLEINFYST…DRIPTVVGFR (69 aa)) are cytoplasmic. Residues 70–90 (VIPTTVLVLLTYLTIFTLVIV) form a helical membrane-spanning segment. Residues 91–404 (TDWLPEPPKN…AELVIFYLND (314 aa)) lie on the Vacuolar side of the membrane. A glycan (N-linked (GlcNAc...) asparagine) is linked at asparagine 158. 2 residues coordinate Zn(2+): histidine 195 and aspartate 207. Catalysis depends on glutamate 239, which acts as the Proton acceptor. Zn(2+) is bound at residue glutamate 240. Asparagine 256 is a glycosylation site (N-linked (GlcNAc...) asparagine). Zn(2+) contacts are provided by glutamate 265 and histidine 341. The chain crosses the membrane as a helical span at residues 405-425 (LLIYNVVSLVVGPISLIFFVV). The Cytoplasmic segment spans residues 426-466 (CEYVLRNERARQPNGHPVSRPSVLEWLKQRSWLRALWRRSK). Residues 467 to 487 (FWIALVITIALQALLVWGYLA) form a helical membrane-spanning segment. Over 488–497 (FNSFTVYSSP) the chain is Vacuolar. A helical transmembrane segment spans residues 498 to 518 (YLVLISFFSLAYLSLVIPLTF). Over 519 to 539 (TFNQTQSPTAKYIAPEREKHT) the chain is Cytoplasmic. The chain crosses the membrane as a helical span at residues 540 to 560 (LLIQVYIFTWILLLFSTIAVA). The Vacuolar portion of the chain corresponds to 561 to 565 (RAQVG). Residues 566 to 586 (GLYFVTAWNTGVWIACLLAAV) traverse the membrane as a helical segment. Over 587-651 (EGMMLPVPQG…ASLRKPQEGG (65 aa)) the chain is Cytoplasmic. Residues 603 to 634 (HSAHHHHHHEHEEDQDADDDDREQRQPPTEAT) are disordered. The helical transmembrane segment at 652–672 (VVGWWIVHLLLTIPAPVLLIA) threads the bilayer. Over 673-692 (QMGSLLLDSLPQTLADGSPA) the chain is Vacuolar. A helical membrane pass occupies residues 693–713 (YVVYAAASLTAVLLAVPLTPF). The Cytoplasmic portion of the chain corresponds to 714–719 (SGKLHR). The helical transmembrane segment at 720–740 (GLFFLFFLSFLIVTAYLWLAF) threads the bilayer. Over 741–1019 (PFSSADPLKV…LVEAWSPFSV (279 aa)) the chain is Vacuolar. Residue asparagine 774 is glycosylated (N-linked (GlcNAc...) asparagine).

Belongs to the peptidase M28 family. Requires Zn(2+) as cofactor.

The protein localises to the vacuole membrane. Its function is as follows. May be involved in vacuolar sorting and osmoregulation. This Laccaria bicolor (strain S238N-H82 / ATCC MYA-4686) (Bicoloured deceiver) protein is Vacuolar membrane protease.